A 300-amino-acid chain; its full sequence is MNHDYGRLVSRAALAATLVATLLLIIKIFAWWYTGSVSILAALVDSLVDIAASLTNLLVVRYSLQPADEEHTFGHGKAESLAALAQSMFISGSALFLFLTGIQHLITPEPMRAPLVGIVVTVAALVTTLMLVTFQRWVVRKTRSQAVRADMLHYQSDVMMNGAILVALALSWYGLHRADALFALGIGVWILYSALRMGYEAIQSLLDRALPDDERQAIVDIVAAWPGVRGAHDLRTRQSGPTRFIQLHLEMEDNLPLVQAHLIAEQVEQAILSRFPGSDVIIHQDPCSVVPRFQQGQFEH.

4 consecutive transmembrane segments (helical) span residues 12–32, 39–59, 82–102, and 114–134; these read AALA…FAWW, ILAA…NLLV, AALA…LTGI, and PLVG…LVTF. The Zn(2+) site is built by D45 and D49. Zn(2+) contacts are provided by H153 and D157. 2 helical membrane passes run 156 to 176 and 182 to 202; these read SDVM…YGLH and FALG…YEAI.

This sequence belongs to the cation diffusion facilitator (CDF) transporter (TC 2.A.4) family. FieF subfamily. Homodimer.

The protein localises to the cell inner membrane. The enzyme catalyses Zn(2+)(in) + H(+)(out) = Zn(2+)(out) + H(+)(in). It catalyses the reaction Cd(2+)(in) + H(+)(out) = Cd(2+)(out) + H(+)(in). It carries out the reaction Fe(2+)(in) + H(+)(out) = Fe(2+)(out) + H(+)(in). Its function is as follows. Divalent metal cation transporter which exports Zn(2+), Cd(2+) and possibly Fe(2+). May be involved in zinc and iron detoxification by efflux. In Cronobacter sakazakii (strain ATCC BAA-894) (Enterobacter sakazakii), this protein is Cation-efflux pump FieF.